The chain runs to 634 residues: MSSCGACTCGAAAARLLTTSLTSAQRGISCGRIHVPVLGRLGTTLDAQALRRAPLRTFSETPAYFASKDGANKDGSGDGNKKSVTEGSSKKSGSGNSGKGGNQLRCPKCGDLCTHVETFVSSTRFVKCEKCHHFFVVLSEADSKKSIIKEPESAAEAVKLAFQQKPPPPPKKIYNYLDKYVVGQSFAKKVLSVAVYNHYKRIYNNIPANLRQQAEAEKQTSLTPRELEIRRREDEYRFTKLLQIAGISPHGNALGASMQQQVNQQMPQEKRGGEVLDSSQDDIKLEKSNILLLGPTGSGKTLLAQTLAKCLDVPFAICDCTTLTQAGYVGEDIESVIAKLLQDANYNVEKAQQGIVFLDEVDKIGSVPGIHQLRDVGGEGVQQGLLKLLEGTIVNVPEKNSRKLRGETVQVDTTNVLFVASGAFNGLDRIISRRKNEKYLGFGTPSNLGKGRRAAAAADLANRSGESNTHQDIEEKDRLLRHVEARDLIEFGMIPEFVGRLPVVVPLHSLDEKTLVQILTEPRNAVIPQYQALFSMDKCELNVTEDALKAIARLALERKTGARGLRSIMEKLLLEPMFEVPNSDIVCVEVDKEVVEGKKEPGYIRAPSKESSEEEYDSGVEEDGWPRQADAANS.

The N-terminal 56 residues, 1-56 (MSSCGACTCGAAAARLLTTSLTSAQRGISCGRIHVPVLGRLGTTLDAQALRRAPLR), are a transit peptide targeting the mitochondrion. A disordered region spans residues 69–102 (DGANKDGSGDGNKKSVTEGSSKKSGSGNSGKGGN). Residues 70 to 84 (GANKDGSGDGNKKSV) show a composition bias toward basic and acidic residues. Residues 85–94 (TEGSSKKSGS) are compositionally biased toward low complexity. The ClpX-type ZB domain occupies 94 to 147 (SGNSGKGGNQLRCPKCGDLCTHVETFVSSTRFVKCEKCHHFFVVLSEADSKKSI). Zn(2+)-binding residues include C106, C109, C128, and C131. 295 to 302 (PTGSGKTL) lines the ATP pocket. An N6-acetyllysine modification is found at K438. Over residues 599 to 611 (KEPGYIRAPSKES) the composition is skewed to basic and acidic residues. The segment at 599–634 (KEPGYIRAPSKESSEEEYDSGVEEDGWPRQADAANS) is disordered. The span at 612–623 (SEEEYDSGVEED) shows a compositional bias: acidic residues. A Phosphoserine modification is found at S618.

The protein belongs to the ClpX chaperone family. In terms of assembly, homohexamer that forms a ring structure; this hexamerization requires ATP binding. Component of the ClpXP complex formed by the assembly of two CLPP heptameric rings with two CLPX hexameric rings, giving rise to a symmetrical structure with two central CLPP rings flanked by a CLPX ring at either end of the complex. Interacts with TFAM. In terms of tissue distribution, detected in liver (at protein level).

It localises to the mitochondrion. The protein localises to the mitochondrion matrix. It is found in the mitochondrion nucleoid. It catalyses the reaction ATP + H2O = ADP + phosphate + H(+). Functionally, ATP-dependent chaperone that functions as an unfoldase. As part of the ClpXP protease complex, it recognizes specific protein substrates, unfolds them using energy derived from ATP hydrolysis, and then translocates them to the proteolytic subunit (CLPP) of the ClpXP complex for degradation. Thanks to its chaperone activity, it also functions in the incorporation of the pyridoxal phosphate cofactor into 5-aminolevulinate synthase, thereby activating 5-aminolevulinate (ALA) synthesis, the first step in heme biosynthesis. This chaperone is also involved in the control of mtDNA nucleoid distribution, by regulating mitochondrial transcription factor A (TFAM) activity. The chain is ATP-dependent clpX-like chaperone, mitochondrial from Mus musculus (Mouse).